The primary structure comprises 38 residues: Glucagon-like peptide (38 aa).

The protein belongs to the glucagon family.

The protein localises to the secreted. The chain is Glucagon-like peptide from Hydrolagus colliei (Spotted ratfish).